The sequence spans 186 residues: Proline-rich protein 3 (186 aa).

The interval 1-97 (MPKRKKQNQP…LGPRSSPYGR (97 aa)) is disordered. 2 stretches are compositionally biased toward pro residues: residues 33–44 (MGPPSLLGPPPM) and 67–79 (MIPP…PPPR). The C3H1-type zinc finger occupies 153-181 (KSDRPVCRHFSKKGHCRYEDHCAFYHPGV).

This is Proline-rich protein 3 (Prr3) from Rattus norvegicus (Rat).